We begin with the raw amino-acid sequence, 564 residues long: 4-hydroxybutyrate--CoA ligase 1 (564 aa).

The helical transmembrane segment at 105-125 (VHPMHWAVFLAVIKGGFVMVP) threads the bilayer. Residues 204–212 (TSGTTGMPK), 343–348 (DFYGQT), D429, and R444 contribute to the ATP site. T348 lines the substrate pocket. Residue 452–454 (SDY) participates in CoA binding. R455 is a binding site for substrate. Residues R484, K513, and 521–523 (VPR) each bind CoA. Residue K538 participates in ATP binding.

Belongs to the ATP-dependent AMP-binding enzyme family. It depends on Mg(2+) as a cofactor. The cofactor is Mn(2+).

It localises to the membrane. It carries out the reaction 4-hydroxybutanoate + ATP + CoA = 4-hydroxybutanoyl-CoA + AMP + diphosphate. It catalyses the reaction acetate + ATP + CoA = acetyl-CoA + AMP + diphosphate. The enzyme catalyses propanoate + ATP + CoA = propanoyl-CoA + AMP + diphosphate. The catalysed reaction is a medium-chain fatty acid + ATP + CoA = a medium-chain fatty acyl-CoA + AMP + diphosphate. In terms of biological role, involved in the 3-hydroxypropionate/4-hydroxybutyrate cycle which incorporates carbon dioxide into cellular carbon. Catalyzes the ligation of coenzyme A (CoA) to 4-hydroxybutyrate (4HB). It can also use butyrate, valerate, propionate, acetate and 3-hydroxybutyrate (3HB) as substrates. This chain is 4-hydroxybutyrate--CoA ligase 1, found in Metallosphaera sedula (strain ATCC 51363 / DSM 5348 / JCM 9185 / NBRC 15509 / TH2).